Reading from the N-terminus, the 309-residue chain is UDP-N-acetylenolpyruvoylglucosamine reductase (309 aa).

Residues 34–199 (RVGGPAQVLF…TSARLRGTPA (166 aa)) enclose the FAD-binding PCMH-type domain. Arg-179 is a catalytic residue. Ser-228 (proton donor) is an active-site residue. Residue Glu-298 is part of the active site.

This sequence belongs to the MurB family. FAD is required as a cofactor.

It localises to the cytoplasm. It catalyses the reaction UDP-N-acetyl-alpha-D-muramate + NADP(+) = UDP-N-acetyl-3-O-(1-carboxyvinyl)-alpha-D-glucosamine + NADPH + H(+). It functions in the pathway cell wall biogenesis; peptidoglycan biosynthesis. Its function is as follows. Cell wall formation. This chain is UDP-N-acetylenolpyruvoylglucosamine reductase, found in Rhodopseudomonas palustris (strain ATCC BAA-98 / CGA009).